Here is a 1029-residue protein sequence, read N- to C-terminus: Myosin phosphatase Rho-interacting protein (1029 aa).

The segment at 1–387 (MSAAKENPCR…DRRSTESSMT (387 aa)) is interaction with F-actin. In terms of domain architecture, PH 1 spans 43 to 150 (KPIYGGWLLL…WLEMLMVYPR (108 aa)). Positions 152–267 (NKQNQKKKRK…GDRVDGGRKV (116 aa)) are disordered. Positions 179-195 (SSSGGSSGSSSSSSSSS) are enriched in low complexity. Phosphoserine is present on residues Ser-198, Ser-224, Ser-226, Ser-230, and Ser-232. Residues 226 to 237 (SPVQSPSQSQPP) show a composition bias toward low complexity. Residues 245–267 (TGLDSKEDENILSGDRVDGGRKV) are compositionally biased toward basic and acidic residues. Phosphoserine occurs at positions 271, 275, 294, and 297. Disordered regions lie at residues 279 to 306 (AKQDLRAEEQLPPLLSPPSPSTPHSRRS) and 333 to 383 (PSSD…RSTE). Phosphothreonine is present on Thr-300. Positions 338 to 354 (RQGRSERRAIPRKRDFA) are enriched in basic and acidic residues. Residue Ser-369 is modified to Phosphoserine. Positions 391–487 (LNFKKGWLTK…WIQTIMKHVL (97 aa)) constitute a PH 2 domain. Residues 490–614 (SAPDVTSSLP…NDGPGMEDTA (125 aa)) form a disordered region. Residues 492–509 (PDVTSSLPEGKNKSTSFD) show a composition bias toward polar residues. Residue Ser-497 is modified to Phosphoserine. Positions 527–550 (PEQKKSRARERRREGRSKTFDWAE) are enriched in basic and acidic residues. The tract at residues 550-828 (EFRPIQQALA…SVQRELEVLS (279 aa)) is interaction with RHOA. The span at 562–571 (RASTVGSSDS) shows a compositional bias: polar residues. Residues 583–592 (ELERERARRR) are compositionally biased toward basic and acidic residues. The residue at position 622 (Ser-622) is a Phosphoserine. Thr-650 carries the post-translational modification Phosphothreonine. A coiled-coil region spans residues 675-979 (STHELTSLLE…LKAATEALGE (305 aa)). Ser-804 carries the phosphoserine modification. The interaction with PPP1R12A stretch occupies residues 828-883 (SEQYSQKCLENAHLAQALEAERQALRQCQRENQELNAHNQELNNRLAAEITRLRTL). Residues Ser-981, Ser-997, Ser-1018, and Ser-1020 each carry the phosphoserine modification.

Binds RHOA, PPP1R12A/MBS and PPP1R12C/MBS85 through adjacent coiled coil domains. Interacts with MYZAP. Binds F-actin through its N-terminus.

It localises to the cytoplasm. It is found in the cytoskeleton. In terms of biological role, targets myosin phosphatase to the actin cytoskeleton. Required for the regulation of the actin cytoskeleton by RhoA and ROCK1. Depletion leads to an increased number of stress fibers in smooth muscle cells through stabilization of actin fibers by phosphorylated myosin. Overexpression of MRIP as well as its F-actin-binding region leads to disassembly of stress fibers in neuronal cells. This is Myosin phosphatase Rho-interacting protein (Mprip) from Rattus norvegicus (Rat).